The sequence spans 339 residues: Undecaprenyl-phosphate 4-deoxy-4-formamido-L-arabinose transferase (339 aa).

Transmembrane regions (helical) follow at residues 235–255 (LSLV…FLLV) and 269–289 (LFVL…GMGL).

Belongs to the glycosyltransferase 2 family.

It is found in the cell inner membrane. The enzyme catalyses UDP-4-deoxy-4-formamido-beta-L-arabinose + di-trans,octa-cis-undecaprenyl phosphate = 4-deoxy-4-formamido-alpha-L-arabinopyranosyl di-trans,octa-cis-undecaprenyl phosphate + UDP. It functions in the pathway glycolipid biosynthesis; 4-amino-4-deoxy-alpha-L-arabinose undecaprenyl phosphate biosynthesis; 4-amino-4-deoxy-alpha-L-arabinose undecaprenyl phosphate from UDP-4-deoxy-4-formamido-beta-L-arabinose and undecaprenyl phosphate: step 1/2. The protein operates within bacterial outer membrane biogenesis; lipopolysaccharide biosynthesis. Catalyzes the transfer of 4-deoxy-4-formamido-L-arabinose from UDP to undecaprenyl phosphate. The modified arabinose is attached to lipid A and is required for resistance to polymyxin and cationic antimicrobial peptides. The protein is Undecaprenyl-phosphate 4-deoxy-4-formamido-L-arabinose transferase of Pseudomonas aeruginosa (strain LESB58).